A 387-amino-acid polypeptide reads, in one-letter code: S-adenosylmethionine synthase (387 aa).

Histidine 15 contributes to the ATP binding site. Position 17 (aspartate 17) interacts with Mg(2+). A K(+)-binding site is contributed by glutamate 43. L-methionine is bound by residues glutamate 56 and glutamine 99. The tract at residues 99–109 is flexible loop; it reads QSPDIAQGVNN. ATP-binding positions include 166 to 168, 232 to 233, aspartate 241, 247 to 248, alanine 264, and lysine 268; these read DAK, RF, and RK. Aspartate 241 serves as a coordination point for L-methionine. Lysine 272 serves as a coordination point for L-methionine.

It belongs to the AdoMet synthase family. As to quaternary structure, homotetramer; dimer of dimers. The cofactor is Mg(2+). K(+) is required as a cofactor.

The protein resides in the cytoplasm. It catalyses the reaction L-methionine + ATP + H2O = S-adenosyl-L-methionine + phosphate + diphosphate. It participates in amino-acid biosynthesis; S-adenosyl-L-methionine biosynthesis; S-adenosyl-L-methionine from L-methionine: step 1/1. Functionally, catalyzes the formation of S-adenosylmethionine (AdoMet) from methionine and ATP. The overall synthetic reaction is composed of two sequential steps, AdoMet formation and the subsequent tripolyphosphate hydrolysis which occurs prior to release of AdoMet from the enzyme. This chain is S-adenosylmethionine synthase, found in Methylobacillus flagellatus (strain ATCC 51484 / DSM 6875 / VKM B-1610 / KT).